The following is a 115-amino-acid chain: Ribosome-binding factor A (115 aa).

The protein belongs to the RbfA family. As to quaternary structure, monomer. Binds 30S ribosomal subunits, but not 50S ribosomal subunits or 70S ribosomes.

Its subcellular location is the cytoplasm. Its function is as follows. One of several proteins that assist in the late maturation steps of the functional core of the 30S ribosomal subunit. Associates with free 30S ribosomal subunits (but not with 30S subunits that are part of 70S ribosomes or polysomes). Required for efficient processing of 16S rRNA. May interact with the 5'-terminal helix region of 16S rRNA. This chain is Ribosome-binding factor A, found in Staphylococcus carnosus (strain TM300).